Consider the following 215-residue polypeptide: Chymomexicain (215 aa).

Intrachain disulfides connect Cys22-Cys63, Cys56-Cys96, and Cys154-Cys201. The active site involves Cys25. Catalysis depends on residues His160 and Asn176.

This sequence belongs to the peptidase C1 family.

Cysteine protease. The polypeptide is Chymomexicain (Jacaratia mexicana (Wild papaya)).